The chain runs to 419 residues: MDKLKIEASEALAGNVVISGAKNAALPILMAGVLAETDFVVTNVPNLRDVNTSCELLRCLGAEVTRSDNSEVRISTSSLDHFCAPYDLVKTMRASILILGPLLARFGTADVSLPGGCAIGARPVNLHLHGLEQMGAKIEVEEGYIKARVDGRLKGAHIFMDMVSVGATENLLMAATLADGETIIENAAREPEVIDLANCLIAMGAKIEGAGTDSIRIQGVESLNGCHYRVMPDRIETGSFLIAAAVTRGKIRCVDADPSTLEAVLAKLEDAGATITTGSDWIELDMQGKRPKAVNIKTVPYPGFPTDMQAQFCLLNVLAEGTSTITETIFENRFMHVPELIRMGANMELEGNTCIIQGIERLNGAQVMATDLRASASLVIAGLVAEGTTIVDRIYHLDRGYEHIEDKFKGLGGQVVRVS.

22-23 contributes to the phosphoenolpyruvate binding site; the sequence is KN. Arg93 contacts UDP-N-acetyl-alpha-D-glucosamine. Catalysis depends on Cys117, which acts as the Proton donor. The residue at position 117 (Cys117) is a 2-(S-cysteinyl)pyruvic acid O-phosphothioketal. UDP-N-acetyl-alpha-D-glucosamine is bound by residues Asp307 and Ile329.

This sequence belongs to the EPSP synthase family. MurA subfamily.

The protein resides in the cytoplasm. It carries out the reaction phosphoenolpyruvate + UDP-N-acetyl-alpha-D-glucosamine = UDP-N-acetyl-3-O-(1-carboxyvinyl)-alpha-D-glucosamine + phosphate. The protein operates within cell wall biogenesis; peptidoglycan biosynthesis. Functionally, cell wall formation. Adds enolpyruvyl to UDP-N-acetylglucosamine. This chain is UDP-N-acetylglucosamine 1-carboxyvinyltransferase, found in Shewanella woodyi (strain ATCC 51908 / MS32).